The chain runs to 160 residues: Class II hydrophobin 8 (160 aa).

4 disulfide bridges follow: cysteine 92–cysteine 141, cysteine 102–cysteine 132, cysteine 103–cysteine 115, and cysteine 142–cysteine 153.

The protein belongs to the cerato-ulmin hydrophobin family. As to quaternary structure, homodimer. Homodimers further self-assemble to form highly ordered films at water-air interfaces through intermolecular interactions.

It localises to the secreted. The protein localises to the cell wall. Aerial growth, conidiation, and dispersal of filamentous fungi in the environment rely upon a capability of their secreting small amphipathic proteins called hydrophobins (HPBs) with low sequence identity. Class I can self-assemble into an outermost layer of rodlet bundles on aerial cell surfaces, conferring cellular hydrophobicity that supports fungal growth, development and dispersal; whereas Class II form highly ordered films at water-air interfaces through intermolecular interactions but contribute nothing to the rodlet structure. This chain is Class II hydrophobin 8, found in Trichoderma asperellum (strain ATCC 204424 / CBS 433.97 / NBRC 101777).